The chain runs to 307 residues: Elongation factor Ts (307 aa).

Residues 82-85 (TDFV) form an involved in Mg(2+) ion dislocation from EF-Tu region.

Belongs to the EF-Ts family.

The protein localises to the cytoplasm. Associates with the EF-Tu.GDP complex and induces the exchange of GDP to GTP. It remains bound to the aminoacyl-tRNA.EF-Tu.GTP complex up to the GTP hydrolysis stage on the ribosome. This is Elongation factor Ts from Nautilia profundicola (strain ATCC BAA-1463 / DSM 18972 / AmH).